An 899-amino-acid chain; its full sequence is Translation initiation factor IF-2 (899 aa).

Disordered regions lie at residues E115 to E137, R170 to K189, and D262 to E309. A tr-type G domain is found at T399–K568. The segment at G408–T415 is G1. G408–T415 is a binding site for GTP. Residues G433–H437 are G2. Residues D454–G457 are G3. GTP-binding positions include D454–H458 and N508–D511. The tract at residues N508 to D511 is G4. The tract at residues S544–H546 is G5.

This sequence belongs to the TRAFAC class translation factor GTPase superfamily. Classic translation factor GTPase family. IF-2 subfamily.

Its subcellular location is the cytoplasm. In terms of biological role, one of the essential components for the initiation of protein synthesis. Protects formylmethionyl-tRNA from spontaneous hydrolysis and promotes its binding to the 30S ribosomal subunits. Also involved in the hydrolysis of GTP during the formation of the 70S ribosomal complex. The protein is Translation initiation factor IF-2 of Acinetobacter baumannii (strain SDF).